Reading from the N-terminus, the 1630-residue chain is MMVKQEEPLNEISPNTPMTSKSYLLNDTLSKVHHSGQTRPLTSVLSGDASSNSIGILAMHNNIIRDFTKIASNNIDLAIEDITTVDHSLNSIYSLLKSHHMWGHINSTVKQHLMIIVKLINNNALGLASSEIIFLFNETNLFQAHSLKNILLADFSTWNDYYLSNLKILALQIILKRKLVDEYLPHILELFSHDKRYLLKDPNLKAHALTKIVLSFFSVTTSCKVLFGLKFLQYIKQFKLPFKKFISNITVECFSKNLLHKNYLEMGPNKIYLNSFYLSYSMLYDGLDKIMLLDILSYEETTEVQRAIKSKKEFNEYCNMSENRLLWSCISVDDLNVILENATNFLQNKGKHISATLKCLVCLWSTIRLEGLPKNKDILRQFDCTVIYINSNIKSINDESAAALLSELLGVLSEICIDYKEPKRLSNIISVLFNASVLFKSHSFLLKTANLEISNVLISNDSKTSHRTILKFEKFISSAQSAQKKIEIFSCLFNVYCMLRNDTLSFVFDFCQNAFIHCFTRLKITKFIEFSNSSEIMLSVLYGNSSIENIPSENWSQLSRMIFCSLRGIFDLDPLELNNTFDKLHLLNKYELLIRIVYLLNLDMSKHLTTNLSKITKLYINKWLQKSDEKAERISSFEMDFVKMLLCYLNFNNFDKLSIELSLCIKSKEKYYSSIVPYADNYLLEAYLSLYMIDDALMMKNQLQKTMNLSTAKIEQALLHASSLINVHLWDSDLTAFQIYFGKTLPAMKPELFDINNDHNLPMSLYIKVILLNIKIFNESAKLNIKAGNVISAVIDCRKAQNLALSLLKKKNKLSQGSRLALLKSLSFSFFQLIKIHIRIGSARDCEFYSKELSRIISDLEEPIIVYRCLHFLHRYYMITEQTCLQNITLGKANKAFDYLDAEADITSLTMFLYDNKEFVKLEQSLVLYFGDQLEKTFLPNLWKLHLGKDIDDSICLSEYMPKNVINRVHNMWQKVMSQLEEDPFFKGMFESTLGIPSSLPVIPSTMPNNILKTPSKHSTGLKLCDSPRSSSMTPRGKNIRQKFDRIAAISKLKQMKELLESLKLDTLDNHELSKISSLSSLTLTILSNITSIHNAESSLITNFSLTDLPRHMPLLFDKVLNNIDNKNYREFRVSSLIAPNNISTITESIRVSAAQKDLMESNLNINVITIDFCPITGNLLLSKLEPRRKRRTHLRLPLIRSNSRDLDEVHLSFPEATKKLLSIINESNQTTSVEVTNKIKTREERKSWWTTRYDLDKRMQQLLNNIENSWFNGVQGFFSPEVVDNSLFEKFKDKFYEILHQNLPSRKLYGNPAMFIKVEDWVIELFLKLNPQEIDFLSKMEDLIYFVLDILLFHGEENAYDEIDFSMLHVQLEEQIKKYRATMTTNSIFHTFLVVSSSCHLFPWECLSFLKDLSITRVPSYVCLNKLLSRFHYQLPLQVTIEDNISMILNPNGDLSRTESKFKGMFQKIIDAKPSSQLVMNEKPEEETLLKMLQNSNLFVYIGHGGGEQYVRSKEIKKCTKIAPSFLLGCSSAAMKYYGKLEPTGTIYTYLLGGCPMVLGNLWDVTDKDIDKFSEELFEKMGFRCNTDDLNGNSLSVSYAVSKSRGVCHLRYLNGAAPVIYGLPIKFVS.

Residues 1016-1037 (SKHSTGLKLCDSPRSSSMTPRG) form a disordered region. The 100-residue stretch at 1443 to 1542 (EDNISMILNP…SAAMKYYGKL (100 aa)) folds into the Peptidase C50 domain. Residue Cys1531 is part of the active site.

In terms of assembly, may bind calcium. Interacts with PDS1. Interacts with MCD1.

It is found in the nucleus. The protein resides in the cytoplasm. The protein localises to the cytoskeleton. It localises to the microtubule organizing center. Its subcellular location is the spindle pole body. The catalysed reaction is All bonds known to be hydrolyzed by this endopeptidase have arginine in P1 and an acidic residue in P4. P6 is often occupied by an acidic residue or by a hydroxy-amino-acid residue, the phosphorylation of which enhances cleavage.. Its activity is regulated as follows. It is inactivated via its interaction with PDS1, which probably covers its active site. PDS1 degradation at anaphase, liberates it and triggers MCD1 cleavage. Caspase-like protease, which plays a central role in the chromosome segregation by cleaving the MCD1/SCC1 subunit of the cohesin complex at the onset of anaphase. During most of the cell cycle, it is inactivated by securin/PDS1 protein. It also promotes anaphase spindle elongation. A component of the FEAR (CDC14 early anaphase release) network which promotes CDC14 release from the nucleolus during early anaphase. Cleaves SLK19. This chain is Separin (ESP1), found in Saccharomyces cerevisiae (strain ATCC 204508 / S288c) (Baker's yeast).